The chain runs to 516 residues: uncharacterized protein (516 aa).

This is an uncharacterized protein from Azotobacter chroococcum mcd 1.